Reading from the N-terminus, the 715-residue chain is MPAESGKRFKPSKYVPVSAAAIFLVGATTLFFAFTCPGLSLYVSPAVPIYNAIMFLFVLANFSMATFMDPGIFPRAEEDEDKEDDFRAPLYKTVEIKGIQVRMKWCATCRFYRPPRCSHCSVCDNCVEEFDHHCPWVNNCIGRRNYRYFFLFLLSLTAHIMGVFGFGLLYVLYHIEELSGVRTAVTMAVMCVAGLFFIPVAGLTGFHVVLVARGRTTNEQVTGKFRGGVNPFTNGCCNNVSRVLCSSPAPRYLGRPKKEKTIVIRPPFLRPEVSDGQITVKIMDNGIQGELRRTKSKGSLEITESQSADAEPPPPPKPDLSRYTGLRTHLGLATNEDSSLLAKDSPPTPTMYKYRPGYSSSSTSAAMPHSSSAKLSRGDSLKEPTSIAESSRHPSYRSEPSLEPESFRSPTFGKSFHFDPLSSGSRSSSLKSAQGTGFELGQLQSIRSEGTTSTSYKSLANQTRNGSLSYDSLLTPSDSPDFESVQAGPEPDPPLGYTSPFLSARLAQQREAERHPRLVPTGPTHREPSPVRYDNLSRHIVASLQEREKLLRQSPPLPGREEEPGLGDSGIQSTPGSGHAPRTSSSSDDSKRSPLGKTPLGRPAVPRFGKPDGLRGRGVGSPEPGPTAPYLGRSMSYSSQKAQPGVSETEEVALQPLLTPKDEVQLKTTYSKSNGQPKSLGSASPGPGQPPLSSPTRGGVKKVSGVGGTTYEISV.

Topologically, residues 1–13 are cytoplasmic; that stretch reads MPAESGKRFKPSK. The chain crosses the membrane as a helical span at residues 14–34; that stretch reads YVPVSAAAIFLVGATTLFFAF. Topologically, residues 35–38 are extracellular; it reads TCPG. The helical transmembrane segment at 39 to 59 threads the bilayer; it reads LSLYVSPAVPIYNAIMFLFVL. The Cytoplasmic portion of the chain corresponds to 60–148; the sequence is ANFSMATFMD…NCIGRRNYRY (89 aa). Y91 is modified (phosphotyrosine; by LYN). Residues 104–154 enclose the DHHC domain; sequence KWCATCRFYRPPRCSHCSVCDNCVEEFDHHCPWVNNCIGRRNYRYFFLFLL. C134 acts as the S-palmitoyl cysteine intermediate in catalysis. The chain crosses the membrane as a helical span at residues 149–169; the sequence is FFLFLLSLTAHIMGVFGFGLL. Residues 170-191 are Extracellular-facing; that stretch reads YVLYHIEELSGVRTAVTMAVMC. A helical transmembrane segment spans residues 192–212; sequence VAGLFFIPVAGLTGFHVVLVA. Over 213–715 the chain is Cytoplasmic; the sequence is RGRTTNEQVT…VGGTTYEISV (503 aa). S247 carries the post-translational modification Phosphoserine. Residues 289–715 are disordered; sequence GELRRTKSKG…VGGTTYEISV (427 aa). T294 is subject to Phosphothreonine. 2 positions are modified to phosphoserine: S296 and S299. Phosphothreonine is present on T303. A Phosphoserine modification is found at S345. T348 and T350 each carry phosphothreonine. Low complexity predominate over residues 359 to 373; the sequence is SSSSTSAAMPHSSSA. 4 positions are modified to phosphoserine: S380, S398, S406, and S409. T411 bears the Phosphothreonine mark. S415, S425, S429, and S432 each carry phosphoserine. Residues 422 to 432 are compositionally biased toward low complexity; sequence SSGSRSSSLKS. T436 is modified (phosphothreonine). The span at 442–478 shows a compositional bias: polar residues; the sequence is QLQSIRSEGTTSTSYKSLANQTRNGSLSYDSLLTPSD. Position 529 is a phosphoserine (S529). Residue Y533 is modified to Phosphotyrosine; by FYN. S554 is modified (phosphoserine). An Omega-N-methylarginine modification is found at R617. S621 is modified (phosphoserine). T659 is modified (phosphothreonine). Positions 666–677 are enriched in polar residues; it reads LKTTYSKSNGQP. S684 and S694 each carry phosphoserine. R697 is subject to Omega-N-methylarginine.

This sequence belongs to the DHHC palmitoyltransferase family. ERF2/ZDHHC9 subfamily. In terms of processing, phosphorylation regulates association with endocytic proteins and its subcellular localization. Phosphorylation by LYN during fatty acid uptake leads to inactivation of the activity. Post-translationally, autopalmitoylated. Palmitoylation of the C-terminal tail regulates stimulation-dependent plasma membrane motility.

The protein resides in the cell membrane. It localises to the synapse. The enzyme catalyses L-cysteinyl-[protein] + hexadecanoyl-CoA = S-hexadecanoyl-L-cysteinyl-[protein] + CoA. Its function is as follows. Palmitoyltransferase that catalyzes the addition of palmitate onto various protein substrates such as CTNND2, CD36, GSDMD, NLRP3, NOD1, NOD2, STAT3 and S1PR1 thus plays a role in various biological processes including cell adhesion, inflammation, fatty acid uptake, bacterial sensing or cardiac functions. Plays an important role in the regulation of synapse efficacy by mediating palmitoylation of delta-catenin/CTNND2, thereby increasing synaptic delivery and surface stabilization of alpha-amino-3-hydroxy-5-methyl-4-isoxazole propionic acid receptors (AMPARs). Under basal conditions, remains at the synaptic membrane through FYN-mediated phosphorylation that prevents association with endocytic proteins. Neuronal activity enhances the internalization and trafficking of DHHC5 from spines to dendritic shafts where it palmitoylates delta-catenin/CTNND2. Regulates cell adhesion at the plasma membrane by palmitoylating GOLGA7B and DSG2. Plays a role in innate immune response by mediating the palmitoylation of NOD1 and NOD2 and their proper recruitment to the bacterial entry site and phagosomes. Also participates in fatty acid uptake by palmitoylating CD36 and thereby targeting it to the plasma membrane. Upon binding of fatty acids to CD36, gets phosphorylated by LYN leading to inactivation and subsequent CD36 caveolar endocytosis. Controls oligodendrocyte development by catalyzing STAT3 palmitoylation. Acts as a regulator of inflammatory response by mediating palmitoylation of NLRP3 and GSDMD. Palmitoylates NLRP3 to promote inflammasome assembly and activation. Activates pyroptosis by catalyzing palmitoylation of gasdermin-D (GSDMD), thereby promoting membrane translocation and pore formation of GSDMD. The sequence is that of Palmitoyltransferase ZDHHC5 from Homo sapiens (Human).